Here is a 321-residue protein sequence, read N- to C-terminus: Nitrilase blr3397 (321 aa).

The CN hydrolase domain occupies 10–277 (YKAAVVQAAS…ETILYADIAL (268 aa)). Glu50 functions as the Proton acceptor in the catalytic mechanism. Lys137 (proton donor) is an active-site residue. The Nucleophile role is filled by Cys171.

The protein belongs to the carbon-nitrogen hydrolase superfamily. Nitrilase family. As to quaternary structure, homodecamer.

It catalyses the reaction an aliphatic nitrile + 2 H2O = a carboxylate + NH4(+). Its function is as follows. Nitrilase that acts on various kinds of nitrile compounds such as aliphatic and aromatic nitriles. Has higher activity toward aliphatic nitriles compared to aromatic nitriles. Among the different substrates tested, has the highest activity toward hydrocinnamonitrile. In Bradyrhizobium diazoefficiens (strain JCM 10833 / BCRC 13528 / IAM 13628 / NBRC 14792 / USDA 110), this protein is Nitrilase blr3397.